A 253-amino-acid chain; its full sequence is Major prion protein (253 aa).

The signal sequence occupies residues Met1 to Cys22. Positions Lys23–Ser230 are interaction with GRB2, ERI3 and SYN1. A disordered region spans residues Pro26–Ser108. 5 tandem repeats follow at residues Pro51–Gln59, Pro60–Gln67, Pro68–Gln75, Pro76–Gln83, and Pro84–Gln91. Positions Pro51 to Gln91 are 5 X 8 AA tandem repeats of P-H-G-G-G-W-G-Q. The span at Gln52–Thr95 shows a compositional bias: gly residues. Cu(2+)-binding residues include His61, Gly62, Gly63, His69, Gly70, Gly71, His77, Gly78, Gly79, His85, Gly86, and Gly87. Cys179 and Cys214 are joined by a disulfide. 2 N-linked (GlcNAc...) asparagine glycosylation sites follow: Asn181 and Asn197. Residue Ser230 is the site of GPI-anchor amidated serine attachment. Positions Ser231–Gly253 are cleaved as a propeptide — removed in mature form.

Belongs to the prion family. In terms of assembly, monomer and homodimer. Has a tendency to aggregate into amyloid fibrils containing a cross-beta spine, formed by a steric zipper of superposed beta-strands. Soluble oligomers may represent an intermediate stage on the path to fibril formation. Copper binding may promote oligomerization. Interacts with GRB2, APP, ERI3/PRNPIP and SYN1. Mislocalized cytosolically exposed PrP interacts with MGRN1; this interaction alters MGRN1 subcellular location and causes lysosomal enlargement. Interacts with KIAA1191.

The protein localises to the cell membrane. It localises to the golgi apparatus. Its primary physiological function is unclear. Has cytoprotective activity against internal or environmental stresses. May play a role in neuronal development and synaptic plasticity. May be required for neuronal myelin sheath maintenance. May play a role in iron uptake and iron homeostasis. Soluble oligomers are toxic to cultured neuroblastoma cells and induce apoptosis (in vitro). Association with GPC1 (via its heparan sulfate chains) targets PRNP to lipid rafts. Also provides Cu(2+) or Zn(2+) for the ascorbate-mediated GPC1 deaminase degradation of its heparan sulfate side chains. The protein is Major prion protein (PRNP) of Trachypithecus francoisi (Francois' leaf monkey).